Here is a 675-residue protein sequence, read N- to C-terminus: PML-RARA-regulated adapter molecule 1 (675 aa).

The span at 1–19 (MGSNQDFRNLQAKFQTSQP) shows a compositional bias: polar residues. Disordered stretches follow at residues 1–473 (MGSN…GPIN) and 523–562 (TDDSSISPRGRDEMLSTQQATRWPQQEPELRKKATQPQQL). Over residues 23–35 (ELFRKTPKPELNK) the composition is skewed to basic and acidic residues. Positions 43-58 (TELSEQPKKSSQSELS) are enriched in polar residues. Residues 141–150 (PKPEFGELSK) show a composition bias toward basic and acidic residues. Composition is skewed to polar residues over residues 224–242 (RKSQPQSESIEVSQTSPSK), 251–264 (HSPQPDISTFPKNN), and 322–331 (LQPSDLTRAS). The residue at position 374 (S374) is a Phosphoserine. The segment covering 407 to 422 (SECSLPSASAGSSPQC) has biased composition (polar residues). Positions 462–471 (PAKPALPPGP) are enriched in pro residues. The span at 537–546 (LSTQQATRWP) shows a compositional bias: polar residues. The 79-residue stretch at 578-656 (KAEREFRKKF…PRTALLPLET (79 aa)) folds into the SH3 domain.

In terms of assembly, interacts with SKAP2, LCP2 and DBNL. May interact with LYN. Interacts with NEK6. Post-translationally, may be phosphorylated on tyrosines. In terms of tissue distribution, expressed in bone marrow and mature neutrophils. Weakly expressed in macrophages and mast cells.

Functionally, may be involved in integrin signaling in neutrophils. Binds to PtdIns(4)P. This Mus musculus (Mouse) protein is PML-RARA-regulated adapter molecule 1 (Pram1).